The chain runs to 218 residues: Ribose-5-phosphate isomerase A (218 aa).

Substrate is bound by residues 27–30 (TGST), 80–83 (DGAD), and 93–96 (KGGG). Glutamate 102 (proton acceptor) is an active-site residue. Lysine 120 serves as a coordination point for substrate.

This sequence belongs to the ribose 5-phosphate isomerase family. Homodimer.

The enzyme catalyses aldehydo-D-ribose 5-phosphate = D-ribulose 5-phosphate. Its pathway is carbohydrate degradation; pentose phosphate pathway; D-ribose 5-phosphate from D-ribulose 5-phosphate (non-oxidative stage): step 1/1. Functionally, catalyzes the reversible conversion of ribose-5-phosphate to ribulose 5-phosphate. This chain is Ribose-5-phosphate isomerase A, found in Picrophilus torridus (strain ATCC 700027 / DSM 9790 / JCM 10055 / NBRC 100828 / KAW 2/3).